A 260-amino-acid chain; its full sequence is Thiazole synthase (260 aa).

Lysine 96 functions as the Schiff-base intermediate with DXP in the catalytic mechanism. 1-deoxy-D-xylulose 5-phosphate contacts are provided by residues glycine 157, 184 to 185 (AG), and 206 to 207 (NT).

The protein belongs to the ThiG family. Homotetramer. Forms heterodimers with either ThiH or ThiS.

It localises to the cytoplasm. It catalyses the reaction [ThiS sulfur-carrier protein]-C-terminal-Gly-aminoethanethioate + 2-iminoacetate + 1-deoxy-D-xylulose 5-phosphate = [ThiS sulfur-carrier protein]-C-terminal Gly-Gly + 2-[(2R,5Z)-2-carboxy-4-methylthiazol-5(2H)-ylidene]ethyl phosphate + 2 H2O + H(+). Its pathway is cofactor biosynthesis; thiamine diphosphate biosynthesis. In terms of biological role, catalyzes the rearrangement of 1-deoxy-D-xylulose 5-phosphate (DXP) to produce the thiazole phosphate moiety of thiamine. Sulfur is provided by the thiocarboxylate moiety of the carrier protein ThiS. In vitro, sulfur can be provided by H(2)S. The sequence is that of Thiazole synthase from Rhodopseudomonas palustris (strain BisA53).